Reading from the N-terminus, the 349-residue chain is S-adenosylmethionine:tRNA ribosyltransferase-isomerase (349 aa).

The protein belongs to the QueA family. As to quaternary structure, monomer.

It localises to the cytoplasm. The enzyme catalyses 7-aminomethyl-7-carbaguanosine(34) in tRNA + S-adenosyl-L-methionine = epoxyqueuosine(34) in tRNA + adenine + L-methionine + 2 H(+). It participates in tRNA modification; tRNA-queuosine biosynthesis. Transfers and isomerizes the ribose moiety from AdoMet to the 7-aminomethyl group of 7-deazaguanine (preQ1-tRNA) to give epoxyqueuosine (oQ-tRNA). This Parabacteroides distasonis (strain ATCC 8503 / DSM 20701 / CIP 104284 / JCM 5825 / NCTC 11152) protein is S-adenosylmethionine:tRNA ribosyltransferase-isomerase.